A 403-amino-acid chain; its full sequence is Phosphopentomutase (403 aa).

Mn(2+)-binding residues include aspartate 13, aspartate 298, histidine 303, aspartate 339, histidine 340, and histidine 351.

This sequence belongs to the phosphopentomutase family. It depends on Mn(2+) as a cofactor.

The protein resides in the cytoplasm. It carries out the reaction 2-deoxy-alpha-D-ribose 1-phosphate = 2-deoxy-D-ribose 5-phosphate. The catalysed reaction is alpha-D-ribose 1-phosphate = D-ribose 5-phosphate. Its pathway is carbohydrate degradation; 2-deoxy-D-ribose 1-phosphate degradation; D-glyceraldehyde 3-phosphate and acetaldehyde from 2-deoxy-alpha-D-ribose 1-phosphate: step 1/2. Isomerase that catalyzes the conversion of deoxy-ribose 1-phosphate (dRib-1-P) and ribose 1-phosphate (Rib-1-P) to deoxy-ribose 5-phosphate (dRib-5-P) and ribose 5-phosphate (Rib-5-P), respectively. In Streptococcus pyogenes serotype M12 (strain MGAS2096), this protein is Phosphopentomutase.